The primary structure comprises 282 residues: Bifunctional protein FolD (282 aa).

Residues 165–167 and Ile-231 contribute to the NADP(+) site; that span reads GAS.

Belongs to the tetrahydrofolate dehydrogenase/cyclohydrolase family. As to quaternary structure, homodimer.

The enzyme catalyses (6R)-5,10-methylene-5,6,7,8-tetrahydrofolate + NADP(+) = (6R)-5,10-methenyltetrahydrofolate + NADPH. The catalysed reaction is (6R)-5,10-methenyltetrahydrofolate + H2O = (6R)-10-formyltetrahydrofolate + H(+). Its pathway is one-carbon metabolism; tetrahydrofolate interconversion. In terms of biological role, catalyzes the oxidation of 5,10-methylenetetrahydrofolate to 5,10-methenyltetrahydrofolate and then the hydrolysis of 5,10-methenyltetrahydrofolate to 10-formyltetrahydrofolate. In Francisella tularensis subsp. mediasiatica (strain FSC147), this protein is Bifunctional protein FolD.